Here is a 130-residue protein sequence, read N- to C-terminus: Ribonuclease P protein component (130 aa).

It belongs to the RnpA family. Consists of a catalytic RNA component (M1 or rnpB) and a protein subunit.

The catalysed reaction is Endonucleolytic cleavage of RNA, removing 5'-extranucleotides from tRNA precursor.. In terms of biological role, RNaseP catalyzes the removal of the 5'-leader sequence from pre-tRNA to produce the mature 5'-terminus. It can also cleave other RNA substrates such as 4.5S RNA. The protein component plays an auxiliary but essential role in vivo by binding to the 5'-leader sequence and broadening the substrate specificity of the ribozyme. This is Ribonuclease P protein component from Psychrobacter sp. (strain PRwf-1).